Consider the following 318-residue polypeptide: Probable RNA methyltransferase At5g51130 (318 aa).

Disordered regions lie at residues 1–61 (MGRD…NQEV) and 146–184 (NSTKPSEKKSSSEGADGVHGSKEPSVSLSNGEAKADSAE). Over residues 16-34 (RSNENEKSVEKVVANEEKV) the composition is skewed to basic and acidic residues. Residues 37–52 (QQKQKQQQGQQGNCNQ) show a composition bias toward low complexity. A Bin3-type SAM domain is found at 82–318 (DPRLKVLKKE…FDRQILAFQK (237 aa)).

This sequence belongs to the methyltransferase superfamily.

Its function is as follows. Probable RNA methyltransferase. This chain is Probable RNA methyltransferase At5g51130, found in Arabidopsis thaliana (Mouse-ear cress).